A 120-amino-acid chain; its full sequence is Large ribosomal subunit protein eL8 (120 aa).

The protein belongs to the eukaryotic ribosomal protein eL8 family. Part of the 50S ribosomal subunit. Probably part of the RNase P complex.

The protein localises to the cytoplasm. Its function is as follows. Multifunctional RNA-binding protein that recognizes the K-turn motif in ribosomal RNA, the RNA component of RNase P, box H/ACA, box C/D and box C'/D' sRNAs. The polypeptide is Large ribosomal subunit protein eL8 (Halorubrum lacusprofundi (strain ATCC 49239 / DSM 5036 / JCM 8891 / ACAM 34)).